The following is a 1393-amino-acid chain: MEVLMAERANLVFHNKAIDGTAIKRLISRLIDHFGMAYTSHILDQVKTLGFQQATATSISLGIDDLLTIPSKGWLVQDAEQQSLILEKHYHYGNVHAVEKLRQSIEIWYATSEYLRQEMNLNFRMTEPFNPVHIMSFSGARGNTSQVHQLVGMRGLMSDPQGQMIDLPIQSNLREGLSLTEYIISCYGARKGVVDTAVRTSDAGYLTRRLVEVVQHIVVRRTDCGTARGISVSPRNGMMPERIFIQTFIGRVLADNIYMGLRCIAIRNQDIGIGLANRFITFRTQTISIRTPFTCRSTSWICRLCYGRSPTHGDLVELGEAVGIIAGQSIGEPGTQLTLRTFHTGGVFTGGTAEHVRAPSNGKIKFNEDLVHPIRTRHGHPAFLCYIDLYVTIKSQDIIHNVTIPPKSFLLVQNDQYVESEQVIAEIRAGAYTLNFKEKVRKHIYSDSEGEMHWSTDVYHAPEFTYSNVHLLPKTSHLWILSGSSCRSSIVPFSLHKDQDQMNVHSLSVKRRYISSPSVNNDQVKHKFFSSDFSGKKESGIPDYSELNRSICTGHCNLIYSTILYKNSDLLAKRRRNKFIIPFQSIQEREKELMTQSAISIEIPINGIFRRNSVFAYFDDPQYRKKSSGITKYGAIGVHSIVKKEDLIEYRGVKEFKPKYQTKVDRFFFIPEEVYILPESSSLMVRNNSIIGVDTQIALNTRSRVGGLVRVERKKKKMELKIFSGDIHFPGETDKISRHSDILIPPGTVKTNSKESKKVKNWIYIQRITPTKKKYFVLVRPVIIYEIANGINLETLFPQDLLQEKDNLKLRVVNYILYGTGKPIRGISDTSIQLVRTCLVLNWDQDKKSSSIEEARAAFVEISTNGLIRDFLRINLVKFHISYIGRKRNDPSGSEPISNNGSDRTNINPFYPIYSKTRVQQSLKQNQGTISTLLNINKECQSLIILSSSNCFQMDPFNDVKHHNVIKESIKRDPIIPIRNSLGPLGTALQIANFYLFYHLNLITHNQISVTKYSKLYNLKQTFQVLKYYLMDENGRIVNPDPCSNSVLNPFNLNWYFLHHNYCESFFTIISLGQFICENLCMAKNGPHLKSGQVIIVHIDSVVIRSAKPYLATPGATVHGHYGEILYEGNTLVTFIYEKSRSGDITQGLPKVEQVLEVRSIDSISINLEKRVEGWNECITRILGIPWGFLIGTELTIVQSRISLVNKIQKVYRSQGVQIHNRHIEIIVRQITSKVLVSEDGMSNVFSPGELIGLLRAERTGRALEEAICYGAILLGITRASLNTQSFISEASFQETTRVLAKAALRGRIDWLKGLKENVVLGGMIPVGTGFKGLVQGSRQHKNIPLKTKKKNLFEGEFRDRDILFHHRELFDSCISKNLYDTSEQSFIGFNDS.

Positions 224, 295, 302, and 305 each coordinate Zn(2+).

It belongs to the RNA polymerase beta' chain family. RpoC2 subfamily. In plastids the minimal PEP RNA polymerase catalytic core is composed of four subunits: alpha, beta, beta', and beta''. When a (nuclear-encoded) sigma factor is associated with the core the holoenzyme is formed, which can initiate transcription. Requires Zn(2+) as cofactor.

Its subcellular location is the plastid. The protein resides in the chloroplast. It catalyses the reaction RNA(n) + a ribonucleoside 5'-triphosphate = RNA(n+1) + diphosphate. Functionally, DNA-dependent RNA polymerase catalyzes the transcription of DNA into RNA using the four ribonucleoside triphosphates as substrates. This chain is DNA-directed RNA polymerase subunit beta'', found in Manihot esculenta (Cassava).